Consider the following 336-residue polypeptide: MSYSEKTTVDPLLRDLDEKKESFRRNVVSLATELKQVRGRLVSQEQSFLKETITRKEAEKRGKNMEMEICKLQKRLEERNCQLEASASAADKFIKELEEFRLKLDTTKQTAEASADSAQSTKIQCSMLKQQLDDKTRSLREQEDRMTQLGHQLDDLQRGLSLRECSEKQLREEVRRIEREVTEAIAKAGIGGMDSELQKLLEDVSPMKFERMNRLVEVKDEEITKLKDEIRLMSGQWKHKTKELESQLEKQRRTDQDLKKKVLKLEFCLQEARSQTRKLQRKGERRDMEIKEIRDLISEKQNLNNESWDKQKFWDNSGFKIVVSMSMLMLVVVSKR.

Positions 125-261 form a coiled coil; that stretch reads CSMLKQQLDD…RRTDQDLKKK (137 aa). Positions 240 to 261 match the Bipartite nuclear localization signal motif; that stretch reads KTKELESQLEKQRRTDQDLKKK. Residues 313–330 form a helical membrane-spanning segment; it reads FWDNSGFKIVVSMSMLML.

In terms of assembly, forms heteromers with NEAP2 and NEAP3. Interacts with SUN1; SUN2 and bZIP18.

Its subcellular location is the nucleus inner membrane. The protein localises to the nucleus. It localises to the nucleoplasm. This is Nuclear envelope-associated protein 1 from Arabidopsis thaliana (Mouse-ear cress).